The sequence spans 196 residues: ATP-dependent Clp protease proteolytic subunit (196 aa).

Ser96 acts as the Nucleophile in catalysis. Residue His121 is part of the active site.

It belongs to the peptidase S14 family. In terms of assembly, fourteen ClpP subunits assemble into 2 heptameric rings which stack back to back to give a disk-like structure with a central cavity, resembling the structure of eukaryotic proteasomes.

The protein resides in the cytoplasm. It carries out the reaction Hydrolysis of proteins to small peptides in the presence of ATP and magnesium. alpha-casein is the usual test substrate. In the absence of ATP, only oligopeptides shorter than five residues are hydrolyzed (such as succinyl-Leu-Tyr-|-NHMec, and Leu-Tyr-Leu-|-Tyr-Trp, in which cleavage of the -Tyr-|-Leu- and -Tyr-|-Trp bonds also occurs).. Cleaves peptides in various proteins in a process that requires ATP hydrolysis. Has a chymotrypsin-like activity. Plays a major role in the degradation of misfolded proteins. The chain is ATP-dependent Clp protease proteolytic subunit from Streptococcus suis (strain 98HAH33).